A 257-amino-acid chain; its full sequence is UPF0246 protein BAV2675 (257 aa).

Belongs to the UPF0246 family.

The sequence is that of UPF0246 protein BAV2675 from Bordetella avium (strain 197N).